The following is a 62-amino-acid chain: Large ribosomal subunit protein eL37 (62 aa).

Residues cysteine 20, cysteine 23, cysteine 35, and cysteine 38 each contribute to the Zn(2+) site. The C4-type zinc-finger motif lies at cysteine 20 to cysteine 38.

Belongs to the eukaryotic ribosomal protein eL37 family. The cofactor is Zn(2+).

In terms of biological role, binds to the 23S rRNA. The protein is Large ribosomal subunit protein eL37 of Staphylothermus marinus (strain ATCC 43588 / DSM 3639 / JCM 9404 / F1).